The following is a 149-amino-acid chain: Calmodulin (149 aa).

N-acetylthreonine is present on T2. 4 EF-hand domains span residues 8–43 (EQIAEFKEAFSLFDKDGDGTITTKELGTVMRSLGQN), 44–79 (PTEAELQDMINEVDADGNGTIDFPEFLTMMARKMKE), 81–116 (DSEEEIREAFRVFDKDGNGFISAAELRHVMTNLGEK), and 117–149 (LTDEEVDEMIREADIDGDGQVNYEEFVAMMTSK). The Ca(2+) site is built by D21, D23, D25, T27, E32, D57, D59, N61, T63, E68, D94, D96, N98, and E105. Position 116 is an N6,N6,N6-trimethyllysine (K116). The Ca(2+) site is built by D130, D132, D134, Q136, and E141.

This sequence belongs to the calmodulin family.

Calmodulin mediates the control of a large number of enzymes, ion channels and other proteins by Ca(2+). Among the enzymes to be stimulated by the calmodulin-Ca(2+) complex are a number of protein kinases and phosphatases. The sequence is that of Calmodulin from Halichondria okadai (Marine sponge).